Reading from the N-terminus, the 106-residue chain is uncharacterized protein (106 aa).

This is an uncharacterized protein from Homo sapiens (Human).